Reading from the N-terminus, the 85-residue chain is LYR motif-containing protein 5A (85 aa).

It belongs to the complex I LYR family.

The protein is LYR motif-containing protein 5A (lyrm5a) of Danio rerio (Zebrafish).